We begin with the raw amino-acid sequence, 916 residues long: Protein translocase subunit SecA (916 aa).

ATP is bound by residues Gln88, Gly106 to Thr110, and Asp519. Zn(2+) is bound by residues Cys902, Cys904, Cys913, and Cys914.

The protein belongs to the SecA family. In terms of assembly, monomer and homodimer. Part of the essential Sec protein translocation apparatus which comprises SecA, SecYEG and auxiliary proteins SecDF. Other proteins may also be involved. Zn(2+) is required as a cofactor.

The protein resides in the cell inner membrane. It is found in the cytoplasm. The enzyme catalyses ATP + H2O + cellular proteinSide 1 = ADP + phosphate + cellular proteinSide 2.. In terms of biological role, part of the Sec protein translocase complex. Interacts with the SecYEG preprotein conducting channel. Has a central role in coupling the hydrolysis of ATP to the transfer of proteins into and across the cell membrane, serving as an ATP-driven molecular motor driving the stepwise translocation of polypeptide chains across the membrane. In Treponema pallidum (strain Nichols), this protein is Protein translocase subunit SecA.